A 459-amino-acid chain; its full sequence is uncharacterized protein (459 aa).

His79 contacts Zn(2+). Residue Glu82 is the Proton acceptor of the active site. His83 and Glu159 together coordinate Zn(2+).

This sequence belongs to the peptidase M16 family. Requires Zn(2+) as cofactor.

This is an uncharacterized protein from Streptomyces coelicolor (strain ATCC BAA-471 / A3(2) / M145).